The chain runs to 178 residues: MSRIGFAPVSVPSGVTVTINGQNVEVKGPKGTLNTDIPAPIAVAQEGDEIVVSRPDDHRKNRSLHGLSRSLVNNMVVGVTEGYTTKMEIFGVGYRVQLKGKDLEFSLGYSHPILIKADEGITFAVDGNTKFSISGIDKQKVGQIAANIRGLRKDDPYKGKGIRYEGEQVRRKVGKTGK.

This sequence belongs to the universal ribosomal protein uL6 family. In terms of assembly, part of the 50S ribosomal subunit.

Its function is as follows. This protein binds to the 23S rRNA, and is important in its secondary structure. It is located near the subunit interface in the base of the L7/L12 stalk, and near the tRNA binding site of the peptidyltransferase center. The polypeptide is Large ribosomal subunit protein uL6 (Corynebacterium urealyticum (strain ATCC 43042 / DSM 7109)).